The sequence spans 483 residues: MDLFSEESPINEIGNMDMTDQQTQLCSSSFSHFLKHPKVQHFISTYSELVKMPTIRYVYFYYLFKKIGGFIGNEKIGTYFSKNVCNNIAAKGVPKLADVYKACEKMNLRQQSEICLLIEEVTRGQYLNSLWDALRDGTISSSKFYWATKKQNSTKKIFEPWPIKNDYYVAGPLAFGLRCEEVIKTVLNELICTPKQASCFDCGFMQSPLDGIFGVSLDYCTNVETNKDNLLVFHPDTEVYEIKSRFKYLFDKSECDTLYKKYKELYSNPCVKTLIKFIFSVSKPAIEFVPSGRLPSESDYLLAYDEEWNLRPTKKRKLNASHEMIKKCIEYNSYAGSQIYILSDPAENNGQITVKSKFKAGIFMNPRHTYFYQVALQHRVVQSYIGLSESPKSLGTQKNFIVSSFFRKRHFSDPPVCYVGKKQLEKTVEIPVFIIITPVYIPRSALLETISQAVNFWEESAKEAFTEYPWAPCALFANGDLTP.

Belongs to the herpesviridae alkaline nuclease family. In terms of assembly, forms a complex with the DNA polymerase, the DNA polymerase processivity factor, and the major DNA binding protein.

The protein resides in the host nucleus. It localises to the host cytoplasm. Functionally, plays a role in processing non linear or branched viral DNA intermediates in order to promote the production of mature packaged unit-length linear progeny viral DNA molecules. Exhibits endonuclease and exonuclease activities and accepts both double-stranded and single-stranded DNA as substrate. Exonuclease digestion of DNA is in the 5'-&gt; 3' direction and the products are 5'-monophosphate nucleosides. Additionally, forms a recombinase with the major DNA-binding protein, which displays strand exchange activity. Also acts as a cytoplasmic RNA endonuclease that induces degradation of the majority of the cellular messenger RNAs during early lytic infection. The resulting inhibition of cellular protein synthesis serves to ensure maximal viral gene expression and evasion from host immune response. Internally cleaves host mRNAs which are then degraded by the cellular exonuclease XRN1. Bypasses therefore the regulatory steps of deadenylation and decapping normally required for XRN1 activation. This Saimiriine herpesvirus 2 (strain 11) (SaHV-2) protein is Shutoff alkaline exonuclease (37).